The following is a 91-amino-acid chain: MPRPALRSRSKKRKLVRTPGGRLALHVIDKKHDYPKCAICGRPIQGVPKLTSRLERRGVRMPTRPYGGYLCHECLRKGIKLSVWMSASKQE.

This sequence belongs to the eukaryotic ribosomal protein eL34 family.

This Thermofilum pendens (strain DSM 2475 / Hrk 5) protein is Large ribosomal subunit protein eL34.